The sequence spans 85 residues: Hepcidin (85 aa).

An N-terminal signal peptide occupies residues 1-24 (MKTFSVAVAVAVVLAFICLQESSA). Residues 25-64 (VPVTEVQELEEPMSNEYQEMPVESWKMPYNNRHKRHSSPG) constitute a propeptide that is removed on maturation. 4 disulfides stabilise this stretch: C66–C83, C69–C72, C70–C79, and C73–C82.

In terms of tissue distribution, predominantly expressed in liver.

The protein localises to the secreted. Its function is as follows. Seems to act as a signaling molecule involved in the maintenance of iron homeostasis. Seems to be required in conjunction with HFE to regulate both intestinal iron absorption and iron storage in macrophages. Functionally, antimicrobial activity against Gram-negative bacteria such as E.coli. This chain is Hepcidin (hamp), found in Morone chrysops x Morone saxatilis (White bass x Striped bass).